A 917-amino-acid chain; its full sequence is MAFIRKKQQEQQLQLYSKERFSLLLLNLEEYYFEQHRANHILHKGSHHERKIRGSLKICSKSVIFEPDSISQPIIKIPLRDCIKIGKHGENGANRHFTKAKSGGISLIFSQVYFIKEHNVVAPYKIERGKMEYVFELDVPGKVEDVVETLLQLHRASCLDKLGDQTAMITAILQSRLARTSFDKNRFQNISEKLHMECKAEMVTPLVTNPGHVCITDTNLYFQPLNGYPKPVVQITLQDVRRIYKRRHGLMPLGLEVFCTEDDLCSDIYLKFYEPQDRDDLYFYIATYLEHHVAEHTAESYMLQWQRGHLSNYQYLLHLNNLADRSCNDLSQYPVFPWIIHDYSSSELDLSNPGTFRDLSKPVGALNKERLERLLTRYQEMPEPKFMYGSHYSSPGYVLFYLVRIAPEYMLCLQNGRFDNADRMFNSIAETWKNCLDGATDFKELIPEFYGDDVSFLVNSLKLDLGKRQGGQMVDDVELPPWASSPEDFLQKSKDALESNYVSEHLHEWIDLIFGYKQKGSDAVGAHNVFHPLTYEGGVDLNSIQDPDEKVAMLTQILEFGQTPKQLFVTPHPRRITPKFKSLSQTSSYNASMADSPGEESFEDLTEESKTLAWNNITKLQLHEHYKIHKEAVTGITVSRNGSSVFTTSQDSTLKMFSKESKMLQRSISFSNMALSSCLLLPGDATVITSSWDNNVYFYSIAFGRRQDTLMGHDDAVSKICWHDNRLYSASWDSTVKVWSGVPAEMPGTKRHHFDLLAELEHDVSVDTISLNAASTLLVSGTKEGTVNIWDLTTATLMHQIPCHSGIVCDTAFSPDSRHVLSTGTDGCLNVIDVQTGMLISSMTSDEPQRCFVWDGNSVLSGSQSGELLVWDLLGAKISERIQGHTGAVTCIWMNEQCSSIITGGEDRQIIFWKLQY.

In terms of domain architecture, GRAM spans 176–247 (RLARTSFDKN…QDVRRIYKRR (72 aa)). The region spanning 189–286 (NISEKLHMEC…DRDDLYFYIA (98 aa)) is the BEACH-type PH domain. Residues 290–575 (EHHVAEHTAE…QLFVTPHPRR (286 aa)) enclose the BEACH domain. 6 WD repeats span residues 628–658 (IHKE…KMFS), 670–700 (FSNM…YFYS), 712–740 (GHDD…KVWS), 761–791 (EHDV…NIWD), 803–833 (CHSG…NVID), and 884–914 (GHTG…IFWK).

Ubiquitous.

Couples the p55 TNF-receptor (TNF-R55 / TNFR1) to neutral sphingomyelinase (N-SMASE). Specifically binds to the N-smase activation domain of TNF-R55. May regulate ceramide production by N-SMASE. The polypeptide is Protein FAN (NSMAF) (Homo sapiens (Human)).